The chain runs to 163 residues: Nucleotide-binding protein Dhaf_3127 (163 aa).

The protein belongs to the YajQ family.

In terms of biological role, nucleotide-binding protein. This chain is Nucleotide-binding protein Dhaf_3127, found in Desulfitobacterium hafniense (strain DSM 10664 / DCB-2).